The sequence spans 270 residues: Phosphatidylglycerol--prolipoprotein diacylglyceryl transferase (270 aa).

The next 7 helical transmembrane spans lie at 10–30, 56–76, 92–112, 120–140, 174–194, 202–222, and 236–256; these read VALA…LIGI, LIFW…VLFY, WKGG…AWWF, FFQL…AGRI, PSQL…LYIF, MAVS…VEFV, and WVTM…GLLW. Arginine 139 contributes to the a 1,2-diacyl-sn-glycero-3-phospho-(1'-sn-glycerol) binding site.

The protein belongs to the Lgt family.

The protein resides in the cell inner membrane. The enzyme catalyses L-cysteinyl-[prolipoprotein] + a 1,2-diacyl-sn-glycero-3-phospho-(1'-sn-glycerol) = an S-1,2-diacyl-sn-glyceryl-L-cysteinyl-[prolipoprotein] + sn-glycerol 1-phosphate + H(+). It participates in protein modification; lipoprotein biosynthesis (diacylglyceryl transfer). In terms of biological role, catalyzes the transfer of the diacylglyceryl group from phosphatidylglycerol to the sulfhydryl group of the N-terminal cysteine of a prolipoprotein, the first step in the formation of mature lipoproteins. The sequence is that of Phosphatidylglycerol--prolipoprotein diacylglyceryl transferase from Pseudomonas fluorescens (strain SBW25).